We begin with the raw amino-acid sequence, 67 residues long: UPF0434 protein RALTA_A0561 (67 aa).

The protein belongs to the UPF0434 family.

The protein is UPF0434 protein RALTA_A0561 of Cupriavidus taiwanensis (strain DSM 17343 / BCRC 17206 / CCUG 44338 / CIP 107171 / LMG 19424 / R1) (Ralstonia taiwanensis (strain LMG 19424)).